The chain runs to 148 residues: 3-dehydroquinate dehydratase (148 aa).

Tyr-23 (proton acceptor) is an active-site residue. 3 residues coordinate substrate: Asn-74, His-80, and Asp-87. The active-site Proton donor is the His-100. Substrate contacts are provided by residues Ile-101–Ser-102 and Arg-111.

The protein belongs to the type-II 3-dehydroquinase family. Homododecamer.

It carries out the reaction 3-dehydroquinate = 3-dehydroshikimate + H2O. It functions in the pathway metabolic intermediate biosynthesis; chorismate biosynthesis; chorismate from D-erythrose 4-phosphate and phosphoenolpyruvate: step 3/7. In terms of biological role, catalyzes a trans-dehydration via an enolate intermediate. The sequence is that of 3-dehydroquinate dehydratase from Anoxybacillus flavithermus (strain DSM 21510 / WK1).